The chain runs to 447 residues: Asparagine--tRNA ligase (447 aa).

This sequence belongs to the class-II aminoacyl-tRNA synthetase family. As to quaternary structure, homodimer.

It is found in the cytoplasm. The enzyme catalyses tRNA(Asn) + L-asparagine + ATP = L-asparaginyl-tRNA(Asn) + AMP + diphosphate + H(+). This chain is Asparagine--tRNA ligase, found in Mycoplasma mobile (strain ATCC 43663 / 163K / NCTC 11711) (Mesomycoplasma mobile).